Reading from the N-terminus, the 147-residue chain is Male-specific protein scotti (147 aa).

Residues 55–93 (PQEPPLGVFPAQGGPNGPPRRRKKRSFYTMTKPTPPCQS) form a disordered region. Residues 82-93 (YTMTKPTPPCQS) show a composition bias toward polar residues. An N-linked (GlcNAc...) asparagine glycan is attached at Asn128.

Belongs to the male-specific scotti family. As to expression, expressed in primary spermatocytes and round spermatids. Low expression is seen in very short elongating cysts, but were detected at high levels in a few longer spermatid cysts.

Post-meiotically transcribed gene that has a role in late spermiogenesis; required for actin cone progression during spermatid individualization. This chain is Male-specific protein scotti, found in Drosophila melanogaster (Fruit fly).